Consider the following 353-residue polypeptide: Protein RecA (353 aa).

68-75 is a binding site for ATP; that stretch reads GPESSGKT.

This sequence belongs to the RecA family.

It localises to the cytoplasm. In terms of biological role, can catalyze the hydrolysis of ATP in the presence of single-stranded DNA, the ATP-dependent uptake of single-stranded DNA by duplex DNA, and the ATP-dependent hybridization of homologous single-stranded DNAs. It interacts with LexA causing its activation and leading to its autocatalytic cleavage. The chain is Protein RecA from Roseiflexus castenholzii (strain DSM 13941 / HLO8).